The sequence spans 217 residues: Large ribosomal subunit protein uL3 (217 aa).

The disordered stretch occupies residues 134–154 (DATHGNSLSHRAPGSIGQCQT). N5-methylglutamine is present on glutamine 153.

This sequence belongs to the universal ribosomal protein uL3 family. Part of the 50S ribosomal subunit. Forms a cluster with proteins L14 and L19. In terms of processing, methylated by PrmB.

Functionally, one of the primary rRNA binding proteins, it binds directly near the 3'-end of the 23S rRNA, where it nucleates assembly of the 50S subunit. The chain is Large ribosomal subunit protein uL3 from Coxiella burnetii (strain Dugway 5J108-111).